The following is a 91-amino-acid chain: Putative methyltransferase YfdM (91 aa).

This chain is Putative methyltransferase YfdM (yfdM), found in Escherichia coli (strain K12).